A 273-amino-acid chain; its full sequence is Protein INAPERTURATE POLLEN1 (273 aa).

The DOG1 domain maps to 12-267 (SRRFNDFYED…KDQILLQDFE (256 aa)).

As to expression, expressed only in anthers and in pollen. Not detected in other flower tissues, stems, leaves and siliques.

It localises to the cytoplasm. Its function is as follows. Required for the formation of pollen surface apertures, which arise by restriction of exine deposition at specific sites. The aperture length depends on the INP1 dosage. Does not play a role in specifying the number or position of apertures. Acts in a sporophytic manner. The polypeptide is Protein INAPERTURATE POLLEN1 (Arabidopsis thaliana (Mouse-ear cress)).